The following is a 119-amino-acid chain: Large ribosomal subunit protein bL20 (119 aa).

This sequence belongs to the bacterial ribosomal protein bL20 family.

Its function is as follows. Binds directly to 23S ribosomal RNA and is necessary for the in vitro assembly process of the 50S ribosomal subunit. It is not involved in the protein synthesizing functions of that subunit. In Streptococcus gordonii (strain Challis / ATCC 35105 / BCRC 15272 / CH1 / DL1 / V288), this protein is Large ribosomal subunit protein bL20.